Reading from the N-terminus, the 235-residue chain is Small ribosomal subunit protein eS4 (235 aa).

One can recognise an S4 RNA-binding domain in the interval 38–99; that stretch reads VTLLSIIRDY…GESYRVVYND (62 aa).

Belongs to the eukaryotic ribosomal protein eS4 family.

In Thermoplasma acidophilum (strain ATCC 25905 / DSM 1728 / JCM 9062 / NBRC 15155 / AMRC-C165), this protein is Small ribosomal subunit protein eS4 (rps4e).